The primary structure comprises 1211 residues: MKENKAFTHLHLHTEYSLLDGANKIKILAKRIKELGMKSVSVTDHGNMFGAIDFYTSMKKEGIKPIIGMEAYIHNDDNLSSKETKQRFHLCLFAKNQEGYENLMFLSSMAYLEGFYYFPRINKKLLREHSKGIIASSACLQGEVNYHLNTNNERNRKYGAKGYDEAKRIACEYQEIFEDDFYLEIMRHGILDQRFIDEQVIKMSLETGLKIIATNDTHYTMPNDAKAQEVAMCVAMGKTLNDKGRLKHSVHEFYIKSPEEMAKLFADIPEALENTQEIADKCVLEIDLKDDKKNPPTPPSFKFTKAYAQNEGLSFEDDASYFAHKAREGLRERLILVPEEKHEQYKERLEKEIEVITNMKFPGYMLIVWDFIRYAKEMGIPVGPGRGSAAGSLVAFALKITDIDPLKYDLLFERFLNPERVSMPDIDTDFCQRRRKEIIEYMIEKYGKYNVAQVITFNKMLAKGVIRDVARVLDMPYKEADDFAKLIPNRLGITLKGYEKNGEFIEGAWELEPKIKELVESNEVAKQVWEYSLNLENLNRNAGVHAAALVVDSQKELWHKTPLFASEKTGGIVTQYSMKYLEPVDLIKFDFLGLKTLTVIDDALKIIKTQHNIDVDFLSLDMDDPKVYKTIQSGDTVGIFQIESGMFQGLNKRLRPSSFEDIIAIIALGRPGPMESGMVDDFVNRKHGVEPIAYAFKELEPILKPTYGTIVYQEQVMQIVQTIGGFSLGEADLIRRAMGKKDAQIMADNKAKFVEGAKNLGHDGQKAANLWDLIVKFAGYGFNKSHSAAYAMITFQTAYLKTYYKHEFMAAMLTSESNKIESVARYIDEVRALEIEVMPPHINSSMQDFSVAEFKNQKGELEKKIVFGLGAVKGVGGEPIKNIIEERAKGDYKSLEDFISRVDFSKLTKKSLEPLVKSGSLDNLGYTRKTMLANLDLICDAGRAKDKANEMMQGGNSLFGAMEGGIKEQVVLDMVDLGEHDAKTLLECEYETLGIHVSGNPLDEFKEEIKGFKNLVKSIDIEELEIGSQAYLLGKIMEVKKKIGKRSGKPYGTADILDRYGKFELMLFEKQLNALEELDINKPLVFKCKIEEQEEVARLRLFEILDLESAREVKIPKARYKDPEKQKEDVREIPPMEMLASSSCSLAIVLENDVKKEFLRQIKESALKHQGKRPLYLIIKDKDKQFKIQSDLMVNEKIKDDFKGLEWRDLA.

The protein belongs to the DNA polymerase type-C family. DnaE subfamily. In terms of assembly, DNA polymerase III contains a core (composed of alpha, epsilon and theta chains) that associates with a tau subunit. This core dimerizes to form the PolIII' complex. PolIII' associates with the gamma complex (composed of gamma, delta, delta', psi and chi chains) and with the beta chain to form the complete DNA polymerase III complex.

It localises to the cytoplasm. The enzyme catalyses DNA(n) + a 2'-deoxyribonucleoside 5'-triphosphate = DNA(n+1) + diphosphate. DNA polymerase III is a complex, multichain enzyme responsible for most of the replicative synthesis in bacteria. This DNA polymerase also exhibits 3' to 5' exonuclease activity. The alpha chain is the DNA polymerase. This Helicobacter pylori (strain J99 / ATCC 700824) (Campylobacter pylori J99) protein is DNA polymerase III subunit alpha (dnaE).